The chain runs to 189 residues: Photosystem I assembly protein Ycf4 (189 aa).

Helical transmembrane passes span 29–49 (WATIVTLGASGFLLAGISSYL) and 69–89 (LVMGLYGAAGLLLATYLWLVI).

The protein belongs to the Ycf4 family.

It is found in the cellular thylakoid membrane. Seems to be required for the assembly of the photosystem I complex. The protein is Photosystem I assembly protein Ycf4 of Nostoc punctiforme (strain ATCC 29133 / PCC 73102).